The chain runs to 399 residues: MKLTDLPDSRGHFGPYGGIFVSETLMAALDALRVEYDAACRDPGFMAEFEYELKHYVGRPSPVYHARRLSEEYGGAQIYLKREDLNHTGAHKINNTIGQALLARRMGKKRVIAETGAGQHGVASATVAARYGMECVVYMGAEDVARQAPNVFRMKLLGATVVPVSSGSKTLKDALNEAMRDWVTNVESTFYILGTAAGPHPYPMLVRDFQCVIGRECIAQMPELVGRQPDAVVACVGGGSNAIGIFHPYIPHENVRLIGVEAGGSGVASGKHAAPLTAGTPGVLHGFRSYLMQDENGQIIETHSVSAGLDYPGVGPEHSYLKDAGRAEYVPINDDEALAAFHDLCRFEGIIPALESSHAVAQAKKLAPTMKKDQVILVNLSGRGDKDINTVAKAAGITL.

At Lys92 the chain carries N6-(pyridoxal phosphate)lysine.

The protein belongs to the TrpB family. In terms of assembly, tetramer of two alpha and two beta chains. Pyridoxal 5'-phosphate is required as a cofactor.

The enzyme catalyses (1S,2R)-1-C-(indol-3-yl)glycerol 3-phosphate + L-serine = D-glyceraldehyde 3-phosphate + L-tryptophan + H2O. It participates in amino-acid biosynthesis; L-tryptophan biosynthesis; L-tryptophan from chorismate: step 5/5. In terms of biological role, the beta subunit is responsible for the synthesis of L-tryptophan from indole and L-serine. The polypeptide is Tryptophan synthase beta chain (Thiobacillus denitrificans (strain ATCC 25259 / T1)).